The primary structure comprises 227 residues: Acyl-protein thioesterase 1 (227 aa).

Active-site charge relay system residues include Ser-119, Asp-173, and His-207.

Belongs to the AB hydrolase superfamily. AB hydrolase 2 family.

It localises to the cytoplasm. The protein resides in the nucleus. The catalysed reaction is S-hexadecanoyl-L-cysteinyl-[protein] + H2O = L-cysteinyl-[protein] + hexadecanoate + H(+). Its function is as follows. Hydrolyzes fatty acids from S-acylated cysteine residues in proteins with a strong preference for palmitoylated G-alpha proteins over other acyl substrates. Mediates the deacylation of G-alpha proteins such as GPA1 in vivo, but has weak or no activity toward palmitoylated Ras proteins. Has weak lysophospholipase activity in vitro; however such activity may not exist in vivo. The polypeptide is Acyl-protein thioesterase 1 (Saccharomyces cerevisiae (strain ATCC 204508 / S288c) (Baker's yeast)).